The primary structure comprises 87 residues: uncharacterized protein (87 aa).

The region spanning 4–87 (SKIIILNNNK…TISGSILIKI (84 aa)) is the 2Fe-2S ferredoxin-type domain. Residues Cys-39, Cys-44, Cys-47, and Cys-75 each contribute to the [2Fe-2S] cluster site.

Requires [2Fe-2S] cluster as cofactor.

This is an uncharacterized protein from Buchnera aphidicola subsp. Baizongia pistaciae (strain Bp).